Reading from the N-terminus, the 733-residue chain is Phosphoribosylformylglycinamidine synthase subunit PurL (733 aa).

The active site involves His41. Residues Tyr44 and Lys83 each contribute to the ATP site. Mg(2+) is bound at residue Glu85. Substrate contacts are provided by residues 86–89 (SHNH) and Arg108. His87 acts as the Proton acceptor in catalysis. Asp109 is a binding site for Mg(2+). Residues 212-232 (GASFASQELSEESEEKRPSVQ) are disordered. Gln232 is a substrate binding site. Asp260 contributes to the Mg(2+) binding site. 304–306 (ESQ) contacts substrate. ATP-binding residues include Asp488 and Gly525. Position 526 (Asn526) interacts with Mg(2+). Ser528 is a substrate binding site.

Belongs to the FGAMS family. In terms of assembly, monomer. Part of the FGAM synthase complex composed of 1 PurL, 1 PurQ and 2 PurS subunits.

The protein localises to the cytoplasm. The catalysed reaction is N(2)-formyl-N(1)-(5-phospho-beta-D-ribosyl)glycinamide + L-glutamine + ATP + H2O = 2-formamido-N(1)-(5-O-phospho-beta-D-ribosyl)acetamidine + L-glutamate + ADP + phosphate + H(+). It functions in the pathway purine metabolism; IMP biosynthesis via de novo pathway; 5-amino-1-(5-phospho-D-ribosyl)imidazole from N(2)-formyl-N(1)-(5-phospho-D-ribosyl)glycinamide: step 1/2. Part of the phosphoribosylformylglycinamidine synthase complex involved in the purines biosynthetic pathway. Catalyzes the ATP-dependent conversion of formylglycinamide ribonucleotide (FGAR) and glutamine to yield formylglycinamidine ribonucleotide (FGAM) and glutamate. The FGAM synthase complex is composed of three subunits. PurQ produces an ammonia molecule by converting glutamine to glutamate. PurL transfers the ammonia molecule to FGAR to form FGAM in an ATP-dependent manner. PurS interacts with PurQ and PurL and is thought to assist in the transfer of the ammonia molecule from PurQ to PurL. This Thermoanaerobacter pseudethanolicus (strain ATCC 33223 / 39E) (Clostridium thermohydrosulfuricum) protein is Phosphoribosylformylglycinamidine synthase subunit PurL.